The chain runs to 206 residues: Ras-related protein Rab7 (206 aa).

GTP contacts are provided by residues G15–T22, D63–Q67, and N125–D128. 2 S-geranylgeranyl cysteine lipidation sites follow: C204 and C206. Position 206 is a cysteine methyl ester (C206).

Belongs to the small GTPase superfamily. Rab family.

The protein localises to the cell membrane. Its function is as follows. Protein transport. Probably involved in vesicular traffic. This is Ras-related protein Rab7 from Vigna aconitifolia (Moth bean).